A 188-amino-acid polypeptide reads, in one-letter code: V-type proton ATPase subunit E (188 aa).

The protein belongs to the V-ATPase E subunit family.

In terms of biological role, produces ATP from ADP in the presence of a proton gradient across the membrane. This Dictyoglomus turgidum (strain DSM 6724 / Z-1310) protein is V-type proton ATPase subunit E.